Here is a 232-residue protein sequence, read N- to C-terminus: Small ribosomal subunit protein uS2 (232 aa).

This sequence belongs to the universal ribosomal protein uS2 family.

This Pelotomaculum thermopropionicum (strain DSM 13744 / JCM 10971 / SI) protein is Small ribosomal subunit protein uS2.